Reading from the N-terminus, the 180-residue chain is NADH-quinone oxidoreductase subunit I (180 aa).

4Fe-4S ferredoxin-type domains follow at residues 50-80 and 90-119; these read LTRDPDGEERCVACNLCAVACPVGCISLQKA and EFFRINFSRCIFCGMCEEACPTTAIQLTPD. [4Fe-4S] cluster contacts are provided by C60, C63, C66, C70, C99, C102, C105, and C109.

This sequence belongs to the complex I 23 kDa subunit family. As to quaternary structure, NDH-1 is composed of 14 different subunits. Subunits NuoA, H, J, K, L, M, N constitute the membrane sector of the complex. It depends on [4Fe-4S] cluster as a cofactor.

Its subcellular location is the cell inner membrane. It catalyses the reaction a quinone + NADH + 5 H(+)(in) = a quinol + NAD(+) + 4 H(+)(out). Functionally, NDH-1 shuttles electrons from NADH, via FMN and iron-sulfur (Fe-S) centers, to quinones in the respiratory chain. The immediate electron acceptor for the enzyme in this species is believed to be ubiquinone. Couples the redox reaction to proton translocation (for every two electrons transferred, four hydrogen ions are translocated across the cytoplasmic membrane), and thus conserves the redox energy in a proton gradient. The chain is NADH-quinone oxidoreductase subunit I from Acinetobacter baumannii (strain ACICU).